The following is a 105-amino-acid chain: MRGGGNMQQMMKQMQKMQKKMAQEQKKLKEERIVGTAGGGMVAVTVTGHKEVVDVEIKEEAVDPDDIEMLQDLVLAATNEAMNKADELTQERLGKHTQGLNIPGM.

Residues 1–33 (MRGGGNMQQMMKQMQKMQKKMAQEQKKLKEERI) are disordered. A compositionally biased stretch (low complexity) spans 7 to 16 (MQQMMKQMQK). Over residues 21-33 (MAQEQKKLKEERI) the composition is skewed to basic and acidic residues.

This sequence belongs to the YbaB/EbfC family. Homodimer.

The protein resides in the cytoplasm. It localises to the nucleoid. Binds to DNA and alters its conformation. May be involved in regulation of gene expression, nucleoid organization and DNA protection. The sequence is that of Nucleoid-associated protein SaurJH1_0513 from Staphylococcus aureus (strain JH1).